The following is a 360-amino-acid chain: DNA polymerase IV (360 aa).

In terms of domain architecture, UmuC spans 8–189 (IIHVDMDCFF…LPLEKIPGVG (182 aa)). Residues D12 and D107 each contribute to the Mg(2+) site. The active site involves E108.

The protein belongs to the DNA polymerase type-Y family. Monomer. Requires Mg(2+) as cofactor.

The protein resides in the cytoplasm. The catalysed reaction is DNA(n) + a 2'-deoxyribonucleoside 5'-triphosphate = DNA(n+1) + diphosphate. In terms of biological role, poorly processive, error-prone DNA polymerase involved in untargeted mutagenesis. Copies undamaged DNA at stalled replication forks, which arise in vivo from mismatched or misaligned primer ends. These misaligned primers can be extended by PolIV. Exhibits no 3'-5' exonuclease (proofreading) activity. May be involved in translesional synthesis, in conjunction with the beta clamp from PolIII. This chain is DNA polymerase IV, found in Vibrio cholerae serotype O1 (strain ATCC 39541 / Classical Ogawa 395 / O395).